Consider the following 330-residue polypeptide: GRB2-related adapter protein 2 (330 aa).

The SH3 1 domain occupies 1 to 56; the sequence is MEAVAKFDFTASGEDELSFHTGDVLKILSNQEEWFKAELGSQEGYVPKNFIDIQFP. Y45 is modified (phosphotyrosine). Residues 58–149 form the SH2 domain; it reads WFHEGLSRHQ…QKQIFLRDRT (92 aa). K106 bears the N6-acetyllysine mark. Positions 143–244 are disordered; that stretch reads IFLRDRTRED…GSLDINDGHC (102 aa). Residues 144 to 164 are compositionally biased toward basic and acidic residues; it reads FLRDRTREDQGHRGNSLDRRS. Residue S187 is modified to Phosphoserine. Residues 209–222 show a composition bias toward low complexity; the sequence is PAPQQLQQPPQQRY. Residue S236 is modified to Phosphoserine. T262 is modified (phosphothreonine). In terms of domain architecture, SH3 2 spans 271 to 330; sequence GRVRWARALYDFEALEDDELGFHSGEVVEVLDSSNPSWWTGRLHNKLGLFPANYVAPMTR.

It belongs to the GRB2/sem-5/DRK family. Interacts with phosphorylated LIME1 upon TCR activation. Interacts with phosphorylated LAT and LAX1 upon TCR activation. Interacts with SHB. Interacts with PTPN23.

The protein resides in the nucleus. The protein localises to the cytoplasm. It is found in the endosome. Its function is as follows. Interacts with SLP-76 to regulate NF-AT activation. Binds to tyrosine-phosphorylated shc. This Homo sapiens (Human) protein is GRB2-related adapter protein 2 (GRAP2).